Consider the following 261-residue polypeptide: X-box-binding protein 1 (261 aa).

Over 1–185 the chain is Cytoplasmic; it reads MVVVAPAQSP…VQAQLSPLQN (185 aa). Low complexity predominate over residues 27–37; that stretch reads TGGAPAGRALP. Residues 27 to 65 are disordered; the sequence is TGGAPAGRALPVMVPGQQGASPEGASGVPPQARKRQRLT. Phosphoserine is present on residues Ser47 and Ser68. The bZIP domain occupies 70 to 133; sequence EEKALRRKLK…HGLVVENQEL (64 aa). Residues 72 to 94 form a basic motif region; that stretch reads KALRRKLKNRVAAQTARDRKKAR. The nuclear localization signal (NLS) stretch occupies residues 76–92; that stretch reads RKLKNRVAAQTARDRKK. The tract at residues 98-133 is leucine-zipper; the sequence is LEQQVVDLEEENQKLLLENQLLREKTHGLVVENQEL. Residues 186-203 form a helical; Signal-anchor for type II membrane protein membrane-spanning segment; it reads ISPWTLMALTLQTLSLTS. The Lumenal portion of the chain corresponds to 204–261; it reads CWAFCSTWTQSCSSDVLPQSLPAWSSSQKWTQKDPVPYRPPLLHPWGRHQPSWKPLMN.

The protein belongs to the bZIP family. As to quaternary structure, isoform 1 interacts with HM13. Isoform 1 interacts with RNF139; the interaction induces ubiquitination and degradation of isoform 1. Isoform 1 interacts (via luminal domain) with DERL1; the interaction obviates the need for ectodomain shedding prior HM13/SPP-mediated XBP1 isoform 1 cleavage. Isoform 1 interacts with HDAC3 and AKT1; the interactions occur in endothelial cell (EC) under disturbed flow. Isoform 1 interacts with the oncoprotein FOS. Interacts with SIRT1. Post-translationally, isoform 1 is ubiquitinated, leading to proteasome-mediated degradation in response to ER stress. X-box-binding protein 1, cytoplasmic form and luminal form are produced by intramembrane proteolytic cleavage of ER membrane-anchored isoform 1 triggered by HM13/SPP in a DERL1-RNF139-dependent and VCP/p97-independent manner. X-box-binding protein 1, luminal form is ubiquitinated leading to proteasomal degradation. In terms of processing, acetylated by EP300; acetylation positively regulates the transcriptional activity of XBP1. Deacetylated by SIRT1; deacetylation negatively regulates the transcriptional activity of XBP1.

It localises to the nucleus. It is found in the endoplasmic reticulum. The protein localises to the cytoplasm. Its subcellular location is the endoplasmic reticulum membrane. The protein resides in the membrane. Functions as a transcription factor during endoplasmic reticulum (ER) stress by regulating the unfolded protein response (UPR). Required for cardiac myogenesis and hepatogenesis during embryonic development, and the development of secretory tissues such as exocrine pancreas and salivary gland. Involved in terminal differentiation of B lymphocytes to plasma cells and production of immunoglobulins. Modulates the cellular response to ER stress in a PIK3R-dependent manner. Binds to the cis-acting X box present in the promoter regions of major histocompatibility complex class II genes. Involved in VEGF-induced endothelial cell (EC) proliferation and retinal blood vessel formation during embryonic development but also for angiogenesis in adult tissues under ischemic conditions. Functions also as a major regulator of the UPR in obesity-induced insulin resistance and type 2 diabetes for the management of obesity and diabetes prevention. Its function is as follows. Acts as a weak transcriptional factor. Together with HDAC3, contributes to the activation of NFE2L2-mediated HMOX1 transcription factor gene expression in a PI(3)K/mTORC2/Akt-dependent signaling pathway leading to EC survival under disturbed flow/oxidative stress. Binds to the ER stress response element (ERSE) upon ER stress. Binds to the consensus 5'-GATGACGTG[TG]N(3)[AT]T-3' sequence related to cAMP responsive element (CRE)-like sequences. Associates preferentially to the HDAC3 gene promoter region in a static flow-dependent manner. Binds to the CDH5/VE-cadherin gene promoter region. The chain is X-box-binding protein 1 from Bos taurus (Bovine).